The primary structure comprises 346 residues: MAEITAKLVKELREKSGAGVMDAKKALVETDGDMDKAVELLREKGMAKAAKKADRVAAEGLTGVYVHGNVAAVVEVNAETDFVAKNAQFVELVNATAKVIAEGKPANNDEALALVMPSGETLAEAYVNATATIGEKISFRRFALIEKADEQHFGAYQHNGGRIGVISVVEGGDDALAKQVSMHIAAMKPTVLSYTELDAQFIKDELAQLNHAIELDNESRAMVDKPALPFLKYGSKAQLSDDVITAAEADIKAELAAEGKPEKIWDKIIPGKMDRFMLDNTKVDQAYTLLAQVYIMDDSKTVEAYLDSVNAKAIAFARFEVGEGIEKKANDFESEVAATMAAALNN.

An involved in Mg(2+) ion dislocation from EF-Tu region spans residues 80–83; that stretch reads TDFV.

Belongs to the EF-Ts family.

It localises to the cytoplasm. Its function is as follows. Associates with the EF-Tu.GDP complex and induces the exchange of GDP to GTP. It remains bound to the aminoacyl-tRNA.EF-Tu.GTP complex up to the GTP hydrolysis stage on the ribosome. This is Elongation factor Ts from Streptococcus pyogenes serotype M1.